The primary structure comprises 92 residues: Dolichol-phosphate mannosyltransferase subunit 3 (92 aa).

The next 2 membrane-spanning stretches (helical) occupy residues 8–28 and 37–57; these read LWAL…ALGL and VLWP…LGTV.

Belongs to the DPM3 family. In terms of assembly, component of the dolichol-phosphate mannose (DPM) synthase complex composed of DPM1, DPM2 and DPM3; within the complex, associates with DPM1 via its C-terminal domain and with DPM2 via its N-terminal portion. This interaction stabilizes DPM1 protein.

It localises to the endoplasmic reticulum membrane. Its pathway is protein modification; protein glycosylation. Functionally, stabilizer subunit of the dolichol-phosphate mannose (DPM) synthase complex; tethers catalytic subunit DPM1 to the endoplasmic reticulum. The sequence is that of Dolichol-phosphate mannosyltransferase subunit 3 (DPM3) from Bos taurus (Bovine).